The chain runs to 1083 residues: uncharacterized protein (1083 aa).

A disordered region spans residues 93–145 (SKGNLRYVPTTSRNPSNTDTYSSSIDISSSSSSINTSDDSSGKTSSNDLSDMS). Low complexity predominate over residues 108 to 145 (SNTDTYSSSIDISSSSSSINTSDDSSGKTSSNDLSDMS).

The protein localises to the virion. This is an uncharacterized protein from Acanthamoeba polyphaga (Amoeba).